Reading from the N-terminus, the 295-residue chain is Malonyl-[acyl-carrier protein] O-methyltransferase (295 aa).

It belongs to the methyltransferase superfamily.

The enzyme catalyses malonyl-[ACP] + S-adenosyl-L-methionine = malonyl-[ACP] methyl ester + S-adenosyl-L-homocysteine. Its pathway is cofactor biosynthesis; biotin biosynthesis. In terms of biological role, converts the free carboxyl group of a malonyl-thioester to its methyl ester by transfer of a methyl group from S-adenosyl-L-methionine (SAM). It allows to synthesize pimeloyl-ACP via the fatty acid synthetic pathway. The chain is Malonyl-[acyl-carrier protein] O-methyltransferase from Halorhodospira halophila (strain DSM 244 / SL1) (Ectothiorhodospira halophila (strain DSM 244 / SL1)).